Consider the following 646-residue polypeptide: MIKITFPDGNVKEFEAGVTTFEIAKSISPSLAKKTLAGKVNGKLIDATRAINEDSNFEIVTPDHEDALGILRHSAAHLFAQAAKRHFPDIHLGVGPAIQDGFYYDTDNEAGQISNDDLATIEAEMKKIVKENFKSERKEVSKEEAKEIFANDPYKLELIEEHNEDEGGLTIYTQGEYTDLCRGPHVPSTGVIKFFHLLNVAGAYWRGNSDNKMMQRIYGTAWFTKEELEENLKLREEAKERDHRKLGRELDLFFNDAELGAGTAYWLPAGATIRRIIERFVVDQEVKNGYQHVITPVMMNLNTYKQSGHWQHYHEDMYPPMDMGDGEEMELRPMNCPSHIAIYKHHVHSYRELPIRIAEFGMMHRYEKSGALSGLQRVREMTLNDGHTFVMLEQVQEEFSKILQLIMDMYRDFGINDYSFRLSYRDPKDTVKYFPDDEMWEKSQAMLKATMDDMNLDYVEAEGEAAFYGPKLDIQVKTALGNEETLSTIQLDFLNPENFDISYIGADGEKHRPVMIHRGVISTLERFIAYLIEVYKGAFPTWLAPTQATIIPVNNEIHADYAWKIQRELQDKGFRVVVDEANEKMGWKIRQSQTHKIPYQIVIGDQEQADGTVNIRRYGSKETKVIPLEEFIENISADVANFSRVD.

Positions 1–61 (MIKITFPDGN…NEDSNFEIVT (61 aa)) constitute a TGS domain. The catalytic stretch occupies residues 242–540 (DHRKLGRELD…LIEVYKGAFP (299 aa)). Zn(2+) is bound by residues cysteine 336, histidine 387, and histidine 517.

It belongs to the class-II aminoacyl-tRNA synthetase family. Homodimer. Zn(2+) is required as a cofactor.

Its subcellular location is the cytoplasm. It carries out the reaction tRNA(Thr) + L-threonine + ATP = L-threonyl-tRNA(Thr) + AMP + diphosphate + H(+). Functionally, catalyzes the attachment of threonine to tRNA(Thr) in a two-step reaction: L-threonine is first activated by ATP to form Thr-AMP and then transferred to the acceptor end of tRNA(Thr). Also edits incorrectly charged L-seryl-tRNA(Thr). The polypeptide is Threonine--tRNA ligase (Lactococcus lactis subsp. lactis (strain IL1403) (Streptococcus lactis)).